Here is a 695-residue protein sequence, read N- to C-terminus: Cysteine-rich receptor-like protein kinase 6 (695 aa).

Residues 1-31 (MRRHRPYLDGVAAAAATFLLAVLLHAPLAAG) form the signal peptide. Residues 32–294 (EDEPPPWVLC…ATSGEKTKNR (263 aa)) lie on the Extracellular side of the membrane. Gnk2-homologous domains lie at 38 to 142 (WVLC…NRDF) and 151 to 261 (TTYT…VFPF). Residues Asn49, Asn53, Asn70, and Asn101 are each glycosylated (N-linked (GlcNAc...) asparagine). 2 disulfide bridges follow: Cys96/Cys105 and Cys108/Cys133. Residue Asn178 is glycosylated (N-linked (GlcNAc...) asparagine). Cystine bridges form between Cys215–Cys224 and Cys227–Cys252. Residues 295-315 (IGTVLAIVMPAIAAILLMVVA) traverse the membrane as a helical segment. Over 316 to 695 (CFCCWKRIKK…DLSITELVPR (380 aa)) the chain is Cytoplasmic. The Protein kinase domain occupies 363–634 (FADTKMIGQG…PTISSVNIML (272 aa)). ATP-binding positions include 369-377 (IGQGGFGMV) and Lys391. Asp488 acts as the Proton acceptor in catalysis. The tract at residues 658–682 (DSSNPYSERYPRPRHSGYSDNSTVV) is disordered.

This sequence belongs to the protein kinase superfamily. Ser/Thr protein kinase family. CRK subfamily.

It localises to the membrane. Functionally, involved in disease resistance. Required for NPR1/NH1-mediated immunity to the bacterial blight pathogen Xanthomomas oryzae pv. oryzae (Xoo). Required for the benzothiadiazole (BTH)-induced immune response. Possesses kinase activity in vitro. The polypeptide is Cysteine-rich receptor-like protein kinase 6 (Oryza sativa subsp. japonica (Rice)).